We begin with the raw amino-acid sequence, 604 residues long: Sulfite reductase [NADPH] flavoprotein alpha-component (604 aa).

Residues 68-206 (LSIIFASQTG…PAAEWRKQAL (139 aa)) enclose the Flavodoxin-like domain. FMN-binding positions include 74 to 79 (SQTGNA), 121 to 124 (STNG), and 157 to 166 (LGDSSYEFFC). An FAD-binding FR-type domain is found at 239–453 (QNPYTATLLT…VEHNNNFKLP (215 aa)). Residues T327, G361, 391 to 394 (RLYS), 409 to 411 (TVG), Y415, and 424 to 427 (GGAS) contribute to the FAD site. Residues 524–525 (SR), 530–534 (KVYVQ), and D566 each bind NADP(+). Y604 serves as a coordination point for FAD.

Belongs to the NADPH-dependent sulphite reductase flavoprotein subunit CysJ family. This sequence in the N-terminal section; belongs to the flavodoxin family. It in the C-terminal section; belongs to the flavoprotein pyridine nucleotide cytochrome reductase family. In terms of assembly, alpha(8)-beta(8). The alpha component is a flavoprotein, the beta component is a hemoprotein. The cofactor is FAD. FMN is required as a cofactor.

The enzyme catalyses hydrogen sulfide + 3 NADP(+) + 3 H2O = sulfite + 3 NADPH + 4 H(+). It functions in the pathway sulfur metabolism; hydrogen sulfide biosynthesis; hydrogen sulfide from sulfite (NADPH route): step 1/1. Functionally, component of the sulfite reductase complex that catalyzes the 6-electron reduction of sulfite to sulfide. This is one of several activities required for the biosynthesis of L-cysteine from sulfate. The flavoprotein component catalyzes the electron flow from NADPH -&gt; FAD -&gt; FMN to the hemoprotein component. The polypeptide is Sulfite reductase [NADPH] flavoprotein alpha-component (Aliivibrio fischeri (strain ATCC 700601 / ES114) (Vibrio fischeri)).